Reading from the N-terminus, the 358-residue chain is Dual-specificity RNA methyltransferase RlmN (358 aa).

Glu-86 serves as the catalytic Proton acceptor. Positions 105–338 (RHKRYTICVS…CTIRQSKGLD (234 aa)) constitute a Radical SAM core domain. Cys-112 and Cys-343 are disulfide-bonded. [4Fe-4S] cluster is bound by residues Cys-119, Cys-123, and Cys-126. Residues 169-170 (GE), Ser-201, 224-226 (SLH), and Asn-300 each bind S-adenosyl-L-methionine. Cys-343 acts as the S-methylcysteine intermediate in catalysis.

It belongs to the radical SAM superfamily. RlmN family. [4Fe-4S] cluster is required as a cofactor.

The protein localises to the cytoplasm. The enzyme catalyses adenosine(2503) in 23S rRNA + 2 reduced [2Fe-2S]-[ferredoxin] + 2 S-adenosyl-L-methionine = 2-methyladenosine(2503) in 23S rRNA + 5'-deoxyadenosine + L-methionine + 2 oxidized [2Fe-2S]-[ferredoxin] + S-adenosyl-L-homocysteine. It catalyses the reaction adenosine(37) in tRNA + 2 reduced [2Fe-2S]-[ferredoxin] + 2 S-adenosyl-L-methionine = 2-methyladenosine(37) in tRNA + 5'-deoxyadenosine + L-methionine + 2 oxidized [2Fe-2S]-[ferredoxin] + S-adenosyl-L-homocysteine. Its function is as follows. Specifically methylates position 2 of adenine 2503 in 23S rRNA and position 2 of adenine 37 in tRNAs. m2A2503 modification seems to play a crucial role in the proofreading step occurring at the peptidyl transferase center and thus would serve to optimize ribosomal fidelity. This Campylobacter hominis (strain ATCC BAA-381 / DSM 21671 / CCUG 45161 / LMG 19568 / NCTC 13146 / CH001A) protein is Dual-specificity RNA methyltransferase RlmN.